Consider the following 353-residue polypeptide: MTEPLKPRIDFDGPLEVEQNPKFRAQQTFDENQAQNFAPATLDEAQEEEGQVEAVMDAALRPKRSLWRKMVMGGLALFGASVVGQGIQWTMNAWQTQDWVALGGCAAGALIIGAGVGSVVTEWRRLWRLRQRAHERDEARDLLHSHGTGKGRAFCEKLAQQAGIDQSHPALQRWYASIHETQNDREVVSLYAHLVQPVLDAQARREISRSAAESTLMIAVSPLALVDMAFIAWRNLRLINRIATLYGIELGYYSRLRLFKLVLLNIAFAGASELVREVGMDWMSQDLAARLSTRAAQGIGAGLLTVRLGIKAMELCRPLPWIDDDKPRLGDFRRQLIGQVKETLQKGKTPSEK.

The next 3 helical transmembrane spans lie at 70-90 (MVMG…IQWT), 100-120 (VALG…GSVV), and 213-233 (ESTL…FIAW).

This sequence belongs to the UPF0283 family.

It localises to the cell inner membrane. The sequence is that of UPF0283 membrane protein YcjF from Shigella flexneri serotype 5b (strain 8401).